Consider the following 489-residue polypeptide: MAKNVRVRYAPSPTGHLHIGGARTALFNYLFARHYGGKMVVRIEDTDIERNVEGGEESQLENLKWLGIDYDESIDKDGGYGPYRQTERLDIYRKYVNELLEQGHAYKCFCTPEELEREREEQRAAGIAAPQYSGKCRHLTPEQVAELEAQGKPYTIRLKVPEGKTYEVDDLVRGKVTFESKDIGDWVIVKANGIPTYNFAVVIDDHLMEISHVFRGEEHLSNTPKQLMVYEYFGWEPPQFAHMTLIVNEQRKKLSKRDESIIQFVSQYKELGYLPEAMFNFFALLGWSPEGEEEIFTKDELIRIFDVARLSKSPSMFDTKKLTWMNNQYIKKLDLDRLVELALPHLVKAGRLPADMSDEQRQWARDLIALYQEQMSYGAEIVSLSELFFKEEVEYEDEARQVLAEEQVPDVLSAFLANVRELEPFTADEIKAAIKAVQKSTGQKGKKLFMPIRAAVTGQTHGPELPFAIQLLGKQKVIERLERALHEKF.

The 'HIGH' region signature appears at Pro11–Gly21. The Zn(2+) site is built by Cys108, Cys110, Cys136, and His138. The short motif at Lys253 to Arg257 is the 'KMSKS' region element. Residue Lys256 participates in ATP binding.

Belongs to the class-I aminoacyl-tRNA synthetase family. Glutamate--tRNA ligase type 1 subfamily. Monomer. Zn(2+) is required as a cofactor.

The protein resides in the cytoplasm. It catalyses the reaction tRNA(Glu) + L-glutamate + ATP = L-glutamyl-tRNA(Glu) + AMP + diphosphate. Functionally, catalyzes the attachment of glutamate to tRNA(Glu) in a two-step reaction: glutamate is first activated by ATP to form Glu-AMP and then transferred to the acceptor end of tRNA(Glu). The protein is Glutamate--tRNA ligase of Geobacillus thermodenitrificans (strain NG80-2).